Here is a 110-residue protein sequence, read N- to C-terminus: Glycine cleavage system H-like protein (110 aa).

In terms of domain architecture, Lipoyl-binding spans 10 to 97; sequence VEKVGDLYVF…PEENWLFKLD (88 aa). Aspartate 27 is modified (ADP-ribosyl aspartic acid). The residue at position 56 (lysine 56) is an N6-lipoyllysine.

Lipoylated GcvH-L directly interacts with SAV0325, which reverses the SirTM-mediated mono-ADP-ribosylation of GcvH-L, and with the oxidoreductase SAV0322. Is lipoylated on K-56 by LplA2 (SAV0327) and then mono-ADP-ribosylated, probably on D-27, by SirTM (SAV0326). The mono-ADP-ribosylation state of GcvH-L might regulate the availability of the lipoyl moiety for redox reactions; ADP-ribosylation would inhibit the interaction of the oxidoreductase with GcvH-L when it is not required, thus ADP-ribosylation of GcvH-L might be acting to keep the response 'off' under non-stress conditions.

Its function is as follows. May act as a carrier protein for the ROS scavenging lipoyl moiety and/or as a substrate for oxidoreductases such as SAV0322 and SAV0323. This is Glycine cleavage system H-like protein from Staphylococcus aureus (strain Mu50 / ATCC 700699).